Reading from the N-terminus, the 196-residue chain is Holliday junction branch migration complex subunit RuvA (196 aa).

A domain I region spans residues 1–63 (MYDYIKGILT…EDAHLLYGFA (63 aa)). The segment at 64 to 142 (TENEKSVFLS…MSEEAGPVQQ (79 aa)) is domain II. Residues 142-146 (QVAPS) are flexible linker. Residues 147-196 (SENIALEEAMEAMEALGYRPAELKKIKKFFEGTNDTAENYIKSALKMLMK) form a domain III region.

This sequence belongs to the RuvA family. As to quaternary structure, homotetramer. Forms an RuvA(8)-RuvB(12)-Holliday junction (HJ) complex. HJ DNA is sandwiched between 2 RuvA tetramers; dsDNA enters through RuvA and exits via RuvB. An RuvB hexamer assembles on each DNA strand where it exits the tetramer. Each RuvB hexamer is contacted by two RuvA subunits (via domain III) on 2 adjacent RuvB subunits; this complex drives branch migration. In the full resolvosome a probable DNA-RuvA(4)-RuvB(12)-RuvC(2) complex forms which resolves the HJ.

The protein resides in the cytoplasm. Functionally, the RuvA-RuvB-RuvC complex processes Holliday junction (HJ) DNA during genetic recombination and DNA repair, while the RuvA-RuvB complex plays an important role in the rescue of blocked DNA replication forks via replication fork reversal (RFR). RuvA specifically binds to HJ cruciform DNA, conferring on it an open structure. The RuvB hexamer acts as an ATP-dependent pump, pulling dsDNA into and through the RuvAB complex. HJ branch migration allows RuvC to scan DNA until it finds its consensus sequence, where it cleaves and resolves the cruciform DNA. This chain is Holliday junction branch migration complex subunit RuvA, found in Streptococcus suis (strain 98HAH33).